A 493-amino-acid polypeptide reads, in one-letter code: Ketol-acid reductoisomerase (NADP(+)) (493 aa).

One can recognise a KARI N-terminal Rossmann domain in the interval 17-208; sequence LSQCRFMDRS…GGDRAGVLHS (192 aa). NADP(+) is bound by residues 45–48, Arg68, Arg76, Ser78, and 108–110; these read CGAQ and DKQ. Residue His132 is part of the active site. Gly158 serves as a coordination point for NADP(+). KARI C-terminal knotted domains lie at 209-344 and 345-486; these read SFIA…NAPS and SNEH…MKDM. Mg(2+)-binding residues include Asp217, Glu221, Glu389, and Glu393. Ser414 serves as a coordination point for substrate.

It belongs to the ketol-acid reductoisomerase family. It depends on Mg(2+) as a cofactor.

It carries out the reaction (2R)-2,3-dihydroxy-3-methylbutanoate + NADP(+) = (2S)-2-acetolactate + NADPH + H(+). It catalyses the reaction (2R,3R)-2,3-dihydroxy-3-methylpentanoate + NADP(+) = (S)-2-ethyl-2-hydroxy-3-oxobutanoate + NADPH + H(+). It participates in amino-acid biosynthesis; L-isoleucine biosynthesis; L-isoleucine from 2-oxobutanoate: step 2/4. Its pathway is amino-acid biosynthesis; L-valine biosynthesis; L-valine from pyruvate: step 2/4. Functionally, involved in the biosynthesis of branched-chain amino acids (BCAA). Catalyzes an alkyl-migration followed by a ketol-acid reduction of (S)-2-acetolactate (S2AL) to yield (R)-2,3-dihydroxy-isovalerate. In the isomerase reaction, S2AL is rearranged via a Mg-dependent methyl migration to produce 3-hydroxy-3-methyl-2-ketobutyrate (HMKB). In the reductase reaction, this 2-ketoacid undergoes a metal-dependent reduction by NADPH to yield (R)-2,3-dihydroxy-isovalerate. In Shewanella amazonensis (strain ATCC BAA-1098 / SB2B), this protein is Ketol-acid reductoisomerase (NADP(+)).